We begin with the raw amino-acid sequence, 1038 residues long: Bone morphogenetic protein receptor type-2 (1038 aa).

The signal sequence occupies residues 1–26; that stretch reads MTSSLHRPFRVPWLLWAVLLVSTTAA. At 27–150 the chain is on the extracellular side; it reads SQNQERLCAF…PPHSFNRDET (124 aa). 5 cysteine pairs are disulfide-bonded: cysteine 34-cysteine 66, cysteine 60-cysteine 84, cysteine 94-cysteine 117, cysteine 99-cysteine 116, and cysteine 118-cysteine 123. An N-linked (GlcNAc...) asparagine glycan is attached at asparagine 55. The N-linked (GlcNAc...) asparagine glycan is linked to asparagine 110. N-linked (GlcNAc...) asparagine glycosylation is present at asparagine 126. The helical transmembrane segment at 151-171 threads the bilayer; the sequence is IIIALASVSVLAVLIVALCFG. Residues 172–1038 lie on the Cytoplasmic side of the membrane; that stretch reads YRMLTGDRKQ…VSKDIGMNCL (867 aa). The Protein kinase domain occupies 203 to 504; that stretch reads LKLLELIGRG…QCAEERMAEL (302 aa). Residues 209–217, lysine 230, and 280–282 contribute to the ATP site; these read IGRGRYGAV and EYY. Catalysis depends on aspartate 333, which acts as the Proton acceptor. Residues 337 to 338 and aspartate 351 each bind ATP; that span reads RN. The residue at position 379 (threonine 379) is a Phosphothreonine. A Phosphoserine modification is found at serine 586. The segment at 593 to 626 is disordered; it reads QAQARIPSPETSVTSLSTNTTTTNTTGLTPSTGM. Residues 603 to 626 show a composition bias toward low complexity; sequence TSVTSLSTNTTTTNTTGLTPSTGM. 2 positions are modified to phosphoserine: serine 680 and serine 681. A disordered region spans residues 746–769; it reads PKQQNLPKRPTSLPLNTKNSTKEP. Serine 843 carries the post-translational modification Phosphoserine. Over residues 872-896 the composition is skewed to basic and acidic residues; the sequence is RREQQAGHDEGVLDRLVDRRERPLE. A disordered region spans residues 872–974; it reads RREQQAGHDE…SGSGEKIKRR (103 aa). Polar residues-rich tracts occupy residues 909–924 and 937–964; these read PCSEQDILTQGVTSTA and RPNSLDLSATNILDGSSIQIGESTQDGK.

Belongs to the protein kinase superfamily. TKL Ser/Thr protein kinase family. TGFB receptor subfamily. Interacts with GDF5. Interacts with BMP4. Interacts with SCUBE3. Interacts with TSC22D1/TSC-22. Interacts with activin A/INHBA. Mg(2+) serves as cofactor. The cofactor is Mn(2+).

It localises to the cell membrane. The catalysed reaction is L-threonyl-[receptor-protein] + ATP = O-phospho-L-threonyl-[receptor-protein] + ADP + H(+). It carries out the reaction L-seryl-[receptor-protein] + ATP = O-phospho-L-seryl-[receptor-protein] + ADP + H(+). On ligand binding, forms a receptor complex consisting of two type II and two type I transmembrane serine/threonine kinases. Type II receptors phosphorylate and activate type I receptors which autophosphorylate, then bind and activate SMAD transcriptional regulators. Can also mediate signaling through the activation of the p38MAPK cascade. Binds to BMP7, BMP2 and, less efficiently, BMP4. Binding is weak but enhanced by the presence of type I receptors for BMPs. Mediates induction of adipogenesis by GDF6. Promotes signaling also by binding to activin A/INHBA. The chain is Bone morphogenetic protein receptor type-2 (Bmpr2) from Mus musculus (Mouse).